The following is an 807-amino-acid chain: Glycerol-3-phosphate acyltransferase (807 aa).

Residues 308-313 (CHRSHM) carry the HXXXXD motif motif.

Belongs to the GPAT/DAPAT family.

It localises to the cell inner membrane. It catalyses the reaction sn-glycerol 3-phosphate + an acyl-CoA = a 1-acyl-sn-glycero-3-phosphate + CoA. Its pathway is phospholipid metabolism; CDP-diacylglycerol biosynthesis; CDP-diacylglycerol from sn-glycerol 3-phosphate: step 1/3. The chain is Glycerol-3-phosphate acyltransferase from Shewanella sp. (strain MR-7).